The following is a 76-amino-acid chain: DNA gyrase inhibitor YacG (76 aa).

Cysteine 20, cysteine 23, cysteine 39, and cysteine 43 together coordinate Zn(2+). The tract at residues 54-76 (EEKSIPGAPDLSDSDGWSDDMGY) is disordered. A compositionally biased stretch (acidic residues) spans 65–76 (SDSDGWSDDMGY).

The protein belongs to the DNA gyrase inhibitor YacG family. As to quaternary structure, interacts with GyrB. It depends on Zn(2+) as a cofactor.

Inhibits all the catalytic activities of DNA gyrase by preventing its interaction with DNA. Acts by binding directly to the C-terminal domain of GyrB, which probably disrupts DNA binding by the gyrase. The sequence is that of DNA gyrase inhibitor YacG from Photobacterium profundum (strain SS9).